The chain runs to 753 residues: MSEKPRRDTGGTGTGSGRSTGQSTNRTSNQQTGTGRTPTATGAHRQPANQSTGGGRSSSTGGRNTPTNQGNARPAAPANARSGNQPARGNNAPAASRSGGSTPAPVRGGGATPAPARGTNTRNARSQQSRGRPQPEEREREREAVLRRPPTPTTTRPVMRPRGPVALPPVMTVRELSEATGIGAADILKTMLKAGMIANINQQIDYETAALIMTDFGIETVENMPEQMVGIVEDVKEVLRSQPPEEMRPRPPVVTIMGHVDHGKTKLLDAIRSTRVAEGEAGGITQHIGAYQVEVNHRKITFLDTPGHEAFTAMRARGAQVTDIVVLVVAADDGVKPQTEEAIAHVKAAGVPMIVAINKIDLPTANPDRIKQQLAALDVIVEEYGGNVPCVHVSARQKINIDGLLEMILLVADLEDLRANPNAPAVGTIIEAKLDKSRGPVATVLIQNGTLHLEDNVLVGCVAGKIKSMFSDSGKRLRHAEPSTPVEIIGLEGVPQAGDILQVMDDLVLAREIALQRQRQQRAEAMAASARGTSLEELFGKVKQGQVKELNLILKADVQGSLDAIAHLIEQLNQSQNEVQTRIIHRGVGAITEGDVNLALASHAIIIGFNARPDPAARRHAEQHGIDIRFYNIIYQLQDDLKKAMAGMLAPTFKEVVEGYAEVRNIFRLPTREVVAGVYVTDGKITRTGQNVRVLRRGVVIHDGKISSLKRFKDDVREVTAGYECGLIVEGFNDIEIGDALEFYRQEQVAATL.

The disordered stretch occupies residues 1 to 166; the sequence is MSEKPRRDTG…PVMRPRGPVA (166 aa). 3 stretches are compositionally biased toward low complexity: residues 19-43, 71-81, and 102-122; these read STGQ…ATGA, NARPAAPANAR, and TPAP…TNTR. Residues 133-146 are compositionally biased toward basic and acidic residues; it reads PQPEEREREREAVL. Residues 153–162 show a composition bias toward low complexity; sequence TTTRPVMRPR. A tr-type G domain is found at 249–418; the sequence is PRPPVVTIMG…LLVADLEDLR (170 aa). Residues 258-265 form a G1 region; it reads GHVDHGKT. 258–265 is a GTP binding site; that stretch reads GHVDHGKT. The interval 283 to 287 is G2; that stretch reads GITQH. Positions 304 to 307 are G3; the sequence is DTPG. Residues 304 to 308 and 358 to 361 each bind GTP; these read DTPGH and NKID. Residues 358–361 form a G4 region; the sequence is NKID. The G5 stretch occupies residues 394-396; that stretch reads SAR.

The protein belongs to the TRAFAC class translation factor GTPase superfamily. Classic translation factor GTPase family. IF-2 subfamily.

The protein resides in the cytoplasm. In terms of biological role, one of the essential components for the initiation of protein synthesis. Protects formylmethionyl-tRNA from spontaneous hydrolysis and promotes its binding to the 30S ribosomal subunits. Also involved in the hydrolysis of GTP during the formation of the 70S ribosomal complex. The sequence is that of Translation initiation factor IF-2 from Chloroflexus aggregans (strain MD-66 / DSM 9485).